A 206-amino-acid chain; its full sequence is Two-component response regulator ARR7 (206 aa).

In terms of domain architecture, Response regulatory spans 25 to 152; sequence HVLAVDDSIV…DVKRIKQLIM (128 aa). At aspartate 85 the chain carries 4-aspartylphosphate. The tract at residues 165–206 is disordered; the sequence is SNKRKLQEDSDTSSSSHDDTSIKDSSCSKRMKSESENLFSLL.

Belongs to the ARR family. Type-A subfamily. Post-translationally, two-component system major event consists of a His-to-Asp phosphorelay between a sensor histidine kinase (HK) and a response regulator (RR). In plants, the His-to-Asp phosphorelay involves an additional intermediate named Histidine-containing phosphotransfer protein (HPt). This multistep phosphorelay consists of a His-Asp-His-Asp sequential transfer of a phosphate group between first a His and an Asp of the HK protein, followed by the transfer to a conserved His of the HPt protein and finally the transfer to an Asp in the receiver domain of the RR protein. In terms of tissue distribution, predominantly expressed in roots and young flowers.

The protein localises to the nucleus. Functionally, functions as a response regulator involved in His-to-Asp phosphorelay signal transduction system. Phosphorylation of the Asp residue in the receiver domain activates the ability of the protein to promote the transcription of target genes. Type-A response regulators seem to act as negative regulators of the cytokinin signaling. This chain is Two-component response regulator ARR7 (ARR7), found in Arabidopsis thaliana (Mouse-ear cress).